Here is a 256-residue protein sequence, read N- to C-terminus: Imidazole glycerol phosphate synthase subunit HisF (256 aa).

Catalysis depends on residues Asp12 and Asp131.

It belongs to the HisA/HisF family. As to quaternary structure, heterodimer of HisH and HisF.

The protein resides in the cytoplasm. It carries out the reaction 5-[(5-phospho-1-deoxy-D-ribulos-1-ylimino)methylamino]-1-(5-phospho-beta-D-ribosyl)imidazole-4-carboxamide + L-glutamine = D-erythro-1-(imidazol-4-yl)glycerol 3-phosphate + 5-amino-1-(5-phospho-beta-D-ribosyl)imidazole-4-carboxamide + L-glutamate + H(+). It functions in the pathway amino-acid biosynthesis; L-histidine biosynthesis; L-histidine from 5-phospho-alpha-D-ribose 1-diphosphate: step 5/9. In terms of biological role, IGPS catalyzes the conversion of PRFAR and glutamine to IGP, AICAR and glutamate. The HisF subunit catalyzes the cyclization activity that produces IGP and AICAR from PRFAR using the ammonia provided by the HisH subunit. The chain is Imidazole glycerol phosphate synthase subunit HisF from Pseudomonas fluorescens (strain Pf0-1).